We begin with the raw amino-acid sequence, 294 residues long: NAD kinase (294 aa).

Asp74 serves as the catalytic Proton acceptor. Residues 74 to 75 (DG), Lys79, 149 to 150 (NE), Asp179, 190 to 195 (TGYSLS), and Ala214 each bind NAD(+).

This sequence belongs to the NAD kinase family. It depends on a divalent metal cation as a cofactor.

Its subcellular location is the cytoplasm. The catalysed reaction is NAD(+) + ATP = ADP + NADP(+) + H(+). Functionally, involved in the regulation of the intracellular balance of NAD and NADP, and is a key enzyme in the biosynthesis of NADP. Catalyzes specifically the phosphorylation on 2'-hydroxyl of the adenosine moiety of NAD to yield NADP. The chain is NAD kinase from Christiangramia forsetii (strain DSM 17595 / CGMCC 1.15422 / KT0803) (Gramella forsetii).